The sequence spans 423 residues: MTNEEPLPKKVRLSESDMKTLTREELCTRWKQHETYVQMLEAKYADLNSNDVTGLKESEEKLKQQQQESARRENILVMRLATKEQEMQECTTQIQYLKQVQQPSAAQLRSSMVDPAINLFFLKMKAELEQTKDKLEQAQNELSAWKFTPDSQTGKKLMAKCRMLIQENQELGRQLSQGRIAQLEAELALQKKYSEELKSSQDELNDFIIQLDEEVEGMQSTILVLQQQLRETRQQLSQMNQTQGTSSGAGPSRTSPSTASEPSTQSEPANASSSNVGKDCGRVSNGPSNGNSSQRGASGSSLYREASSADEDYPPSPSVSSPTHDGISKLSNHSEDAVSQRGGEGYVTQLSAGYESVDSPTGSETSVTQHSNDTDSNADSHEAAAVPKGSRTAGTRHSTQNGLDSSAAAVATNTSNASAGSVL.

The interval 234–423 (QQLSQMNQTQ…TSNASAGSVL (190 aa)) is disordered. Composition is skewed to polar residues over residues 239-276 (MNQT…SSNV), 285-301 (NGPS…SGSS), 358-377 (DSPT…TDSN), and 392-404 (TAGT…NGLD). Low complexity predominate over residues 405–423 (SSAAAVATNTSNASAGSVL).

The protein belongs to the fl(2)d family. In terms of assembly, component of the WMM complex, a N6-methyltransferase complex composed of a catalytic subcomplex, named MAC, and of an associated subcomplex, named MACOM. Component of the MACOM subcomplex.

Its subcellular location is the nucleus speckle. It localises to the nucleus. The protein localises to the nucleoplasm. Functionally, associated component of the WMM complex, a complex that mediates N6-methyladenosine (m6A) methylation of RNAs, a modification that plays a role in the efficiency of mRNA splicing and RNA processing. This is Pre-mRNA-splicing regulator WTAP from Danio rerio (Zebrafish).